The primary structure comprises 269 residues: Phosphate import ATP-binding protein PstB (269 aa).

Positions 22 to 264 (IKVKNVDFFY…PANKKTEDYI (243 aa)) constitute an ABC transporter domain. Position 55 to 62 (55 to 62 (GSSGSGKS)) interacts with ATP.

This sequence belongs to the ABC transporter superfamily. Phosphate importer (TC 3.A.1.7) family. The complex is composed of two ATP-binding proteins (PstB), two transmembrane proteins (PstC and PstA) and a solute-binding protein (PstS).

The protein localises to the cell membrane. It carries out the reaction phosphate(out) + ATP + H2O = ADP + 2 phosphate(in) + H(+). Functionally, part of the ABC transporter complex PstSACB involved in phosphate import. Responsible for energy coupling to the transport system. The polypeptide is Phosphate import ATP-binding protein PstB (Spiroplasma kunkelii).